Consider the following 344-residue polypeptide: Dihydroorotase (344 aa).

Zn(2+)-binding residues include His13 and His15. Residues His15–Arg17 and Asn41 contribute to the substrate site. Zn(2+)-binding residues include Lys99, His136, and His174. Position 99 is an N6-carboxylysine (Lys99). Residue His136 coordinates substrate. Substrate is bound at residue Leu219. Position 247 (Asp247) interacts with Zn(2+). Asp247 is a catalytic residue. Substrate is bound by residues His251 and Ala263.

Belongs to the metallo-dependent hydrolases superfamily. DHOase family. Class II DHOase subfamily. Homodimer. Zn(2+) serves as cofactor.

It catalyses the reaction (S)-dihydroorotate + H2O = N-carbamoyl-L-aspartate + H(+). Its pathway is pyrimidine metabolism; UMP biosynthesis via de novo pathway; (S)-dihydroorotate from bicarbonate: step 3/3. Catalyzes the reversible cyclization of carbamoyl aspartate to dihydroorotate. The polypeptide is Dihydroorotase (Shewanella denitrificans (strain OS217 / ATCC BAA-1090 / DSM 15013)).